The sequence spans 237 residues: Phosphoribosylaminoimidazole-succinocarboxamide synthase (237 aa).

This sequence belongs to the SAICAR synthetase family.

It catalyses the reaction 5-amino-1-(5-phospho-D-ribosyl)imidazole-4-carboxylate + L-aspartate + ATP = (2S)-2-[5-amino-1-(5-phospho-beta-D-ribosyl)imidazole-4-carboxamido]succinate + ADP + phosphate + 2 H(+). Its pathway is purine metabolism; IMP biosynthesis via de novo pathway; 5-amino-1-(5-phospho-D-ribosyl)imidazole-4-carboxamide from 5-amino-1-(5-phospho-D-ribosyl)imidazole-4-carboxylate: step 1/2. This is Phosphoribosylaminoimidazole-succinocarboxamide synthase from Salmonella arizonae (strain ATCC BAA-731 / CDC346-86 / RSK2980).